Reading from the N-terminus, the 430-residue chain is MESKWLTVDTKHLYGFDEAIFIQKYQKKVNQIHQQFLNQQLPDGHMNGWYSQPDQDHKGLLKQINTIAKQFNALKVTDIVYLGIGGSYTGIRAILDFLKPEQKANIKVHFVPDISAFNIAAVARAIKGKSWALVVTSKSGRTLEPAVTFRYFRNLLHKQYKQKHALRTVVITDAVKGLLVGMSNQYGYAHLTIPSNIGGRFSTLSPAGLLLAKLCGHDPKQLLLGTLTAKQELANSDLNTNSAYYYAALRHWLYTTKKLKIEVTVAYHSAYEYLLLQHRQLFGESEGKGGKSLFPTFSLFTTDLHSMGQLYQEGEKNFFETVIQVQTQFHDLELPPSDFNNDDQLDYLLAKSMNEISNTALEAVVEAHFQSNVNIIKLTLKERTTFMFGYFYFWLSMATMMSGSLLGHNVFDQPGVEVYKQLMFAKLGRE.

Glu284 acts as the Proton donor in catalysis. Active-site residues include His305 and Lys420.

Belongs to the GPI family.

The protein resides in the cytoplasm. The catalysed reaction is alpha-D-glucose 6-phosphate = beta-D-fructose 6-phosphate. It functions in the pathway carbohydrate biosynthesis; gluconeogenesis. It participates in carbohydrate degradation; glycolysis; D-glyceraldehyde 3-phosphate and glycerone phosphate from D-glucose: step 2/4. In terms of biological role, catalyzes the reversible isomerization of glucose-6-phosphate to fructose-6-phosphate. The chain is Glucose-6-phosphate isomerase from Mycoplasma pneumoniae (strain ATCC 29342 / M129 / Subtype 1) (Mycoplasmoides pneumoniae).